Here is a 320-residue protein sequence, read N- to C-terminus: MPQQSRSAAEIYHQPLMDLLFQAQTVHRAHFDPNVVQCSKLLSIKTGGCPEDCAYCSQSARNGSELSASKLMEVQRVLAEARRAKEAGATRYCMGAAWRSPKERDMPAVLAMIRGVKAMGMETCMTLGMLDADQALRLKDAGLDYYNHNIDTSERYYSEIITTRTFQDRIETLERVQAAGINVCAGGIVGMGETAEDRISMLETLAGLEVPPQSVPINMLMPMAGTPLADVPRLDAIEMVRTIATARILMPASYVRLSAGRSEMSDEMQAMCFFAGANSIFVGDTLLTAGNPDEDKDALLFAKLGLRAEVPEASQEGCAA.

The 228-residue stretch at 34–261 folds into the Radical SAM core domain; sequence NVVQCSKLLS…ASYVRLSAGR (228 aa). [4Fe-4S] cluster contacts are provided by cysteine 49, cysteine 53, and cysteine 56. [2Fe-2S] cluster-binding residues include cysteine 93, cysteine 124, cysteine 184, and arginine 256.

The protein belongs to the radical SAM superfamily. Biotin synthase family. Homodimer. [4Fe-4S] cluster serves as cofactor. Requires [2Fe-2S] cluster as cofactor.

It catalyses the reaction (4R,5S)-dethiobiotin + (sulfur carrier)-SH + 2 reduced [2Fe-2S]-[ferredoxin] + 2 S-adenosyl-L-methionine = (sulfur carrier)-H + biotin + 2 5'-deoxyadenosine + 2 L-methionine + 2 oxidized [2Fe-2S]-[ferredoxin]. It functions in the pathway cofactor biosynthesis; biotin biosynthesis; biotin from 7,8-diaminononanoate: step 2/2. Catalyzes the conversion of dethiobiotin (DTB) to biotin by the insertion of a sulfur atom into dethiobiotin via a radical-based mechanism. This chain is Biotin synthase 2, found in Paracoccus denitrificans (strain Pd 1222).